Here is a 1088-residue protein sequence, read N- to C-terminus: DNA-directed RNA polymerase subunit beta (1088 aa).

Belongs to the RNA polymerase beta chain family. As to quaternary structure, in plastids the minimal PEP RNA polymerase catalytic core is composed of four subunits: alpha, beta, beta', and beta''. When a (nuclear-encoded) sigma factor is associated with the core the holoenzyme is formed, which can initiate transcription.

It is found in the plastid. Its subcellular location is the chloroplast. The enzyme catalyses RNA(n) + a ribonucleoside 5'-triphosphate = RNA(n+1) + diphosphate. DNA-dependent RNA polymerase catalyzes the transcription of DNA into RNA using the four ribonucleoside triphosphates as substrates. The polypeptide is DNA-directed RNA polymerase subunit beta (Ostreococcus tauri).